A 286-amino-acid chain; its full sequence is Flagellar filament 33 kDa core protein (286 aa).

The protein belongs to the bacterial flagellin family. As to quaternary structure, the flagellum consists of an outer layer composed of repeating units of FlaA around a core that contains several antigenically related polypeptides.

Its subcellular location is the periplasmic flagellum. The protein resides in the periplasm. Component of the core of the flagella. This is Flagellar filament 33 kDa core protein from Treponema phagedenis.